The chain runs to 78 residues: Small nuclear ribonucleoprotein F (78 aa).

Positions asparagine 7–valine 78 constitute a Sm domain.

It belongs to the snRNP Sm proteins family. SmF/LSm6 subfamily. In terms of assembly, belongs to the 40S cdc5-associated complex (or cwf complex), a spliceosome sub-complex reminiscent of a late-stage spliceosome composed of the U2, U5 and U6 snRNAs and at least brr2, cdc5, cwf2/prp3, cwf3/syf1, cwf4/syf3, cwf5/ecm2, spp42/cwf6, cwf7/spf27, cwf8, cwf9, cwf10, cwf11, cwf12, prp45/cwf13, cwf14, cwf15, cwf16, cwf17, cwf18, cwf19, cwf20, cwf21, cwf22, cwf23, cwf24, cwf25, cwf26, cyp7/cwf27, cwf28, cwf29/ist3, lea1, msl1, prp5/cwf1, prp10, prp12/sap130, prp17, prp22, sap61, sap62, sap114, sap145, slu7, smb1, smd1, smd3, smf1, smg1 and syf2.

The protein resides in the nucleus. It is found in the cytoplasm. Its function is as follows. Plays a role in pre-mRNA splicing as a core component of the spliceosomal U1, U2, U4 and U5 small nuclear ribonucleoproteins (snRNPs), the building blocks of the spliceosome. In Schizosaccharomyces pombe (strain 972 / ATCC 24843) (Fission yeast), this protein is Small nuclear ribonucleoprotein F (smf1).